A 338-amino-acid chain; its full sequence is DNA-directed RNA polymerase subunit alpha (338 aa).

Positions 1-225 (MLISQRPTIT…ELFGLARELN (225 aa)) are alpha N-terminal domain (alpha-NTD). The tract at residues 240–338 (TEYIAAYSMP…YIDVEAEDSE (99 aa)) is alpha C-terminal domain (alpha-CTD). Residues 319 to 338 (LEGYDAETGGYIDVEAEDSE) form a disordered region.

This sequence belongs to the RNA polymerase alpha chain family. In terms of assembly, homodimer. The RNAP catalytic core consists of 2 alpha, 1 beta, 1 beta' and 1 omega subunit. When a sigma factor is associated with the core the holoenzyme is formed, which can initiate transcription.

It carries out the reaction RNA(n) + a ribonucleoside 5'-triphosphate = RNA(n+1) + diphosphate. In terms of biological role, DNA-dependent RNA polymerase catalyzes the transcription of DNA into RNA using the four ribonucleoside triphosphates as substrates. This chain is DNA-directed RNA polymerase subunit alpha, found in Corynebacterium glutamicum (strain R).